The sequence spans 258 residues: Phosphate import ATP-binding protein PstB (258 aa).

An ABC transporter domain is found at 5–247 (LDLKDVNIYY…EKIFSNPTQK (243 aa)). 37–44 (GPSGCGKS) lines the ATP pocket.

The protein belongs to the ABC transporter superfamily. Phosphate importer (TC 3.A.1.7) family. As to quaternary structure, the complex is composed of two ATP-binding proteins (PstB), two transmembrane proteins (PstC and PstA) and a solute-binding protein (PstS).

It localises to the cell membrane. It carries out the reaction phosphate(out) + ATP + H2O = ADP + 2 phosphate(in) + H(+). Part of the ABC transporter complex PstSACB involved in phosphate import. Responsible for energy coupling to the transport system. The protein is Phosphate import ATP-binding protein PstB of Rhodococcus jostii (strain RHA1).